The following is a 104-amino-acid chain: Co-chaperonin GroES 3 (104 aa).

It belongs to the GroES chaperonin family. As to quaternary structure, heptamer of 7 subunits arranged in a ring. Interacts with the chaperonin GroEL.

It localises to the cytoplasm. In terms of biological role, together with the chaperonin GroEL, plays an essential role in assisting protein folding. The GroEL-GroES system forms a nano-cage that allows encapsulation of the non-native substrate proteins and provides a physical environment optimized to promote and accelerate protein folding. GroES binds to the apical surface of the GroEL ring, thereby capping the opening of the GroEL channel. This chain is Co-chaperonin GroES 3, found in Bradyrhizobium diazoefficiens (strain JCM 10833 / BCRC 13528 / IAM 13628 / NBRC 14792 / USDA 110).